A 141-amino-acid polypeptide reads, in one-letter code: MGFWDAVTDLIDAATPWATVEAEAPADTPAETAPASESTEETTAETKAEESAPAAEEPEEEAEEEEEEEEDEDEIVDPKETLEEECRNSKECAPAKHHYDECAARVTGAGADNKEDCVEEFFHLVHCATQCAAPKLWNTLK.

Low complexity predominate over residues 18 to 37; the sequence is ATVEAEAPADTPAETAPASE. Residues 18–94 form a disordered region; it reads ATVEAEAPAD…ECRNSKECAP (77 aa). The span at 56–75 shows a compositional bias: acidic residues; it reads EEPEEEAEEEEEEEEDEDEI. A compositionally biased stretch (basic and acidic residues) spans 76-94; sequence VDPKETLEEECRNSKECAP. A disulfide bond links Cys102 and Cys117.

This sequence belongs to the UQCRH/QCR6 family. In terms of assembly, component of the ubiquinol-cytochrome c oxidoreductase (cytochrome b-c1 complex, complex III, CIII), a multisubunit enzyme composed of 10 subunits. The complex is composed of 3 respiratory subunits cytochrome b (cob), cytochrome c1 (cyt-1) and Rieske protein (fes-1), 2 core protein subunits pep and ucr-1, and 5 low-molecular weight protein subunits qcr6, qcr7, qcr8, qcr9 and probably NCU16844/qcr10. The complex exists as an obligatory dimer and forms supercomplexes (SCs) in the inner mitochondrial membrane with NADH-ubiquinone oxidoreductase (complex I, CI) and cytochrome c oxidase (complex IV, CIV), resulting in different assemblies (supercomplexes SCI(1)III(2), SCIII(2)IV(1) and SCIII(2)IV(2) as well as higher order I(x)III(y)IV(z) megacomplexes).

The protein resides in the mitochondrion inner membrane. Functionally, component of the ubiquinol-cytochrome c oxidoreductase, a multisubunit transmembrane complex that is part of the mitochondrial electron transport chain which drives oxidative phosphorylation. The respiratory chain contains 3 multisubunit complexes succinate dehydrogenase (complex II, CII), ubiquinol-cytochrome c oxidoreductase (cytochrome b-c1 complex, complex III, CIII) and cytochrome c oxidase (complex IV, CIV), that cooperate to transfer electrons derived from NADH and succinate to molecular oxygen, creating an electrochemical gradient over the inner membrane that drives transmembrane transport and the ATP synthase. The cytochrome b-c1 complex catalyzes electron transfer from ubiquinol to cytochrome c, linking this redox reaction to translocation of protons across the mitochondrial inner membrane, with protons being carried across the membrane as hydrogens on the quinol. In the process called Q cycle, 2 protons are consumed from the matrix, 4 protons are released into the intermembrane space and 2 electrons are passed to cytochrome c. In Neurospora crassa (strain ATCC 24698 / 74-OR23-1A / CBS 708.71 / DSM 1257 / FGSC 987), this protein is Cytochrome b-c1 complex subunit 6, mitochondrial (qcr6).